Reading from the N-terminus, the 321-residue chain is tRNA uridine(34) hydroxylase (321 aa).

Positions 135-233 (DDPDTLVIDT…YLEQVPEEES (99 aa)) constitute a Rhodanese domain. Catalysis depends on C193, which acts as the Cysteine persulfide intermediate. The disordered stretch occupies residues 301-321 (RQRQMDQLSSASSKKSDDFSL).

It belongs to the TrhO family.

The catalysed reaction is uridine(34) in tRNA + AH2 + O2 = 5-hydroxyuridine(34) in tRNA + A + H2O. Its function is as follows. Catalyzes oxygen-dependent 5-hydroxyuridine (ho5U) modification at position 34 in tRNAs. The protein is tRNA uridine(34) hydroxylase of Parasynechococcus marenigrum (strain WH8102).